Reading from the N-terminus, the 418-residue chain is Gamma-glutamyl phosphate reductase (418 aa).

Belongs to the gamma-glutamyl phosphate reductase family.

Its subcellular location is the cytoplasm. The enzyme catalyses L-glutamate 5-semialdehyde + phosphate + NADP(+) = L-glutamyl 5-phosphate + NADPH + H(+). The protein operates within amino-acid biosynthesis; L-proline biosynthesis; L-glutamate 5-semialdehyde from L-glutamate: step 2/2. Its function is as follows. Catalyzes the NADPH-dependent reduction of L-glutamate 5-phosphate into L-glutamate 5-semialdehyde and phosphate. The product spontaneously undergoes cyclization to form 1-pyrroline-5-carboxylate. In Nitrosococcus oceani (strain ATCC 19707 / BCRC 17464 / JCM 30415 / NCIMB 11848 / C-107), this protein is Gamma-glutamyl phosphate reductase.